A 298-amino-acid chain; its full sequence is ATP synthase gamma chain (298 aa).

This sequence belongs to the ATPase gamma chain family. As to quaternary structure, F-type ATPases have 2 components, CF(1) - the catalytic core - and CF(0) - the membrane proton channel. CF(1) has five subunits: alpha(3), beta(3), gamma(1), delta(1), epsilon(1). CF(0) has three main subunits: a, b and c.

Its subcellular location is the cell inner membrane. Produces ATP from ADP in the presence of a proton gradient across the membrane. The gamma chain is believed to be important in regulating ATPase activity and the flow of protons through the CF(0) complex. This Francisella tularensis subsp. tularensis (strain WY96-3418) protein is ATP synthase gamma chain.